The sequence spans 225 residues: Protein-L-isoaspartate O-methyltransferase 2 (225 aa).

Ser-73 is an active-site residue.

This sequence belongs to the methyltransferase superfamily. L-isoaspartyl/D-aspartyl protein methyltransferase family.

It localises to the cytoplasm. It carries out the reaction [protein]-L-isoaspartate + S-adenosyl-L-methionine = [protein]-L-isoaspartate alpha-methyl ester + S-adenosyl-L-homocysteine. Its function is as follows. Catalyzes the methyl esterification of L-isoaspartyl residues in peptides and proteins that result from spontaneous decomposition of normal L-aspartyl and L-asparaginyl residues. It plays a role in the repair and/or degradation of damaged proteins. The chain is Protein-L-isoaspartate O-methyltransferase 2 from Pelobacter propionicus (strain DSM 2379 / NBRC 103807 / OttBd1).